A 221-amino-acid chain; its full sequence is GTP-binding nuclear protein Ran-3 (221 aa).

A Small GTPase Ran-type domain is found at 10-174 (DYPSFKLVIV…LYLARKLAGD (165 aa)). 21–28 (DGGTGKTT) provides a ligand contact to GTP. Positions 40 to 48 (KKYEPTIGV) are switch-I. Residues Gly71, 125-128 (NKVD), and 153-155 (SAK) contribute to the GTP site. The segment at 71-87 (GQEKFGGLRDGYYIHGQ) is switch-II. A disordered region spans residues 201 to 221 (EAELAAAASQPLPDDDDDTFE).

Belongs to the small GTPase superfamily. Ran family. Found in a nuclear export complex with RanGTP, exportin and pre-miRNA. Interacts with RanBP1a and RanBP1b. Interacts with KPNB1.

The protein localises to the nucleus. Its function is as follows. GTP-binding protein involved in nucleocytoplasmic transport. Required for the import of protein into the nucleus and also for RNA export. Involved in chromatin condensation and control of cell cycle. This Arabidopsis thaliana (Mouse-ear cress) protein is GTP-binding nuclear protein Ran-3 (RAN3).